We begin with the raw amino-acid sequence, 471 residues long: Argininosuccinate lyase (471 aa).

Belongs to the lyase 1 family. Argininosuccinate lyase subfamily.

The protein resides in the cytoplasm. It catalyses the reaction 2-(N(omega)-L-arginino)succinate = fumarate + L-arginine. It functions in the pathway amino-acid biosynthesis; L-arginine biosynthesis; L-arginine from L-ornithine and carbamoyl phosphate: step 3/3. The protein is Argininosuccinate lyase of Renibacterium salmoninarum (strain ATCC 33209 / DSM 20767 / JCM 11484 / NBRC 15589 / NCIMB 2235).